The sequence spans 475 residues: L-seryl-tRNA(Sec) selenium transferase (475 aa).

Lys295 carries the N6-(pyridoxal phosphate)lysine modification.

The protein belongs to the SelA family. It depends on pyridoxal 5'-phosphate as a cofactor.

Its subcellular location is the cytoplasm. The catalysed reaction is L-seryl-tRNA(Sec) + selenophosphate + H(+) = L-selenocysteinyl-tRNA(Sec) + phosphate. The protein operates within aminoacyl-tRNA biosynthesis; selenocysteinyl-tRNA(Sec) biosynthesis; selenocysteinyl-tRNA(Sec) from L-seryl-tRNA(Sec) (bacterial route): step 1/1. Converts seryl-tRNA(Sec) to selenocysteinyl-tRNA(Sec) required for selenoprotein biosynthesis. The protein is L-seryl-tRNA(Sec) selenium transferase of Desulfovibrio desulfuricans (strain ATCC 27774 / DSM 6949 / MB).